A 413-amino-acid chain; its full sequence is Ribulose bisphosphate carboxylase/oxygenase activase, chloroplastic (413 aa).

The N-terminal 54 residues, 1–54, are a transit peptide targeting the chloroplast; that stretch reads MAATVSTIGAVNRTTLNNSNYGGLVPNSAFLGSRLKVSSRFTTSKMVTGNFKIV. 162-169 is a binding site for ATP; that stretch reads GGKGQGKS.

Belongs to the RuBisCO activase family.

The protein localises to the plastid. It localises to the chloroplast stroma. Functionally, activation of RuBisCO (ribulose-1,5-bisphosphate carboxylase/oxygenase; EC 4.1.1.39) involves the ATP-dependent carboxylation of the epsilon-amino group of lysine leading to a carbamate structure. This Cucumis sativus (Cucumber) protein is Ribulose bisphosphate carboxylase/oxygenase activase, chloroplastic.